We begin with the raw amino-acid sequence, 197 residues long: TLE family member 5 (197 aa).

The interval Leu-166 to Asp-197 is CCN domain. Residues His-174–Asp-197 form a disordered region. Residues Leu-175–Asp-197 show a composition bias toward basic and acidic residues. Ser-196 carries the phosphoserine modification.

It belongs to the WD repeat Groucho/TLE family. In terms of assembly, homooligomer and heterooligomer with other family members. Binds TCF7. Binds the NF-kappa-B subunit RELA. Interacts with PHF12. Interacts (via Q domain) with SIX3. Interacts with SIX6. Post-translationally, ubiquitinated by XIAP/BIRC4. As to expression, found predominantly in muscle, heart and Placenta. In fetal tissues, abundantly expressed in the heart, lung, kidney, brain and liver.

The protein localises to the nucleus. Its function is as follows. Transcriptional corepressor. Acts as a dominant repressor towards other family members. Inhibits NF-kappa-B-regulated gene expression. May be required for the initiation and maintenance of the differentiated state. Essential for the transcriptional repressor activity of SIX3 during retina and lens development. The polypeptide is TLE family member 5 (Homo sapiens (Human)).